Here is a 25-residue protein sequence, read N- to C-terminus: Phospholipase A1 verutoxin-2a (25 aa).

This sequence belongs to the AB hydrolase superfamily. Lipase family. In terms of processing, contains six disulfide bonds. In terms of tissue distribution, expressed by the venom gland.

It is found in the secreted. The enzyme catalyses a 1,2-diacyl-sn-glycero-3-phosphocholine + H2O = a 2-acyl-sn-glycero-3-phosphocholine + a fatty acid + H(+). It carries out the reaction 1-(9Z-octadecenoyl)-2-hexadecanoyl-sn-glycero-3-phosphocholine + H2O = 2-hexadecanoyl-sn-glycero-3-phosphocholine + (9Z)-octadecenoate + H(+). The catalysed reaction is a 1-acyl-sn-glycero-3-phosphocholine + H2O = sn-glycerol 3-phosphocholine + a fatty acid + H(+). Its pathway is phospholipid metabolism. With respect to regulation, activity is maximal in the presence of calcium. However, unlike phospholipases A2 whose catalytic activity is strictly calcium-dependent, this enzyme shows considerable catalytic activity on phosphatidylcholine emulsified in calcium free solution; the catalytic activity of VT-2a assayed in the absence of calcium ions is 18-20% of that assayed in solution containing calcium ions. Its function is as follows. Catalyzes the hydrolysis of glycerophospholipids such as phosphatidylcholine (1,2-diacyl-sn-glycero-3-phosphocholine) and has a moderate activity to hydrolyze lysoglycerophospholipids such as lysophosphatidylcholine (1-acyl-sn-glycero-3-phosphocholine), but is unable to hydrolyze sphingomyelin. In addition to acting as an allergen, it possesses a potent hemolytic activity on red blood cells of mice (98.8% of hemolysis at 3.0 ug/ml). The protein is Phospholipase A1 verutoxin-2a of Vespa velutina (Asian yellow-legged hornet).